Reading from the N-terminus, the 126-residue chain is MAKYTNDELLEAFGEMTLVELSEFVKAFEEKFDVEAAAPVAAVAAVAGAAAPAEEEKDEFDVILSAVGDKKIQVIKAVRAITSLGLAEAKALVDGAPKAVLEKAKKEDAEKAKAQLEEAGASVELK.

The protein belongs to the bacterial ribosomal protein bL12 family. As to quaternary structure, homodimer. Part of the ribosomal stalk of the 50S ribosomal subunit. Forms a multimeric L10(L12)X complex, where L10 forms an elongated spine to which 2 to 4 L12 dimers bind in a sequential fashion. Binds GTP-bound translation factors.

In terms of biological role, forms part of the ribosomal stalk which helps the ribosome interact with GTP-bound translation factors. Is thus essential for accurate translation. The protein is Large ribosomal subunit protein bL12 of Bifidobacterium longum subsp. infantis (strain ATCC 15697 / DSM 20088 / JCM 1222 / NCTC 11817 / S12).